A 252-amino-acid chain; its full sequence is 3-dehydroquinate dehydratase (252 aa).

Residues Ser21, 46–48, and Arg82 each bind 3-dehydroquinate; that span reads EWR. His143 functions as the Proton donor/acceptor in the catalytic mechanism. The Schiff-base intermediate with substrate role is filled by Lys170. 3 residues coordinate 3-dehydroquinate: Arg213, Ser232, and Gln236.

Belongs to the type-I 3-dehydroquinase family. Homodimer.

The enzyme catalyses 3-dehydroquinate = 3-dehydroshikimate + H2O. It functions in the pathway metabolic intermediate biosynthesis; chorismate biosynthesis; chorismate from D-erythrose 4-phosphate and phosphoenolpyruvate: step 3/7. Its function is as follows. Involved in the third step of the chorismate pathway, which leads to the biosynthesis of aromatic amino acids. Catalyzes the cis-dehydration of 3-dehydroquinate (DHQ) and introduces the first double bond of the aromatic ring to yield 3-dehydroshikimate. This chain is 3-dehydroquinate dehydratase, found in Escherichia coli O157:H7.